A 367-amino-acid chain; its full sequence is Alpha-2-HS-glycoprotein (367 aa).

A signal peptide spans 1–18 (MKSLVLLLCLAQLWGCHS). A Cystatin fetuin-A-type 1 domain is found at 27–133 (YRQPNCDDPE…KFSVVYAKCD (107 aa)). 6 disulfide bridges follow: cysteine 32/cysteine 358, cysteine 89/cysteine 100, cysteine 114/cysteine 132, cysteine 146/cysteine 149, cysteine 208/cysteine 219, and cysteine 230/cysteine 247. Residue serine 134 is modified to Phosphoserine. A phosphoserine; by FAM20C mark is found at serine 135 and serine 138. One can recognise a Cystatin fetuin-A-type 2 domain in the interval 144–255 (KVCQDCPLLA…TCMVFQTQPV (112 aa)). 2 N-linked (GlcNAc...) (complex) asparagine glycosylation sites follow: asparagine 156 and asparagine 176. The disordered stretch occupies residues 255-298 (VSSQPQPEGANEAVPTPVVDPDAPPSPPLGAPGLPPAGSPPDSH). An O-linked (GalNAc...) threonine glycan is attached at threonine 270. Residues 276 to 293 (DAPPSPPLGAPGLPPAGS) are compositionally biased toward pro residues. Residues serine 280 and serine 293 are each glycosylated (O-linked (GalNAc...) serine). The propeptide at 301 to 340 (LAAPPGHQLHRAHYDLRHTFMGVVSLGSPSGEVSHPRKTR) is connecting peptide. Residue threonine 319 is modified to Phosphothreonine; by FAM20C. A phosphoserine; by FAM20C mark is found at serine 325, serine 328, and serine 330. O-linked (GalNAc...) threonine glycosylation is found at threonine 339 and threonine 341. Serine 346 is a glycosylation site (O-linked (GalNAc...) serine).

Belongs to the fetuin family. In terms of assembly, alpha-2-HS glycoprotein derives from this precursor, when the connecting peptide is cleaved off. The two chains A and B are held together by a single disulfide bond. Post-translationally, phosphorylated by FAM20C in the extracellular medium. In terms of processing, O- and N-glycosylated. O-glycosylated with core 1 or possibly core 8 glycans. N-glycan at Asn-156: Hex5HexNAc4; N-glycan heterogeneity at Asn-176: Hex5HexNAc4 (major) and Hex6HexNAc5 (minor). As to expression, synthesized in liver and selectively concentrated in bone matrix. Secreted in plasma. It is also found in dentin in much higher quantities than other plasma proteins.

It is found in the secreted. Functionally, promotes endocytosis, possesses opsonic properties and influences the mineral phase of bone. Shows affinity for calcium and barium ions. The protein is Alpha-2-HS-glycoprotein (AHSG) of Homo sapiens (Human).